We begin with the raw amino-acid sequence, 108 residues long: Small ribosomal subunit protein mS33 (108 aa).

The interval 84 to 108 is disordered; that stretch reads LRARDKGAPKKKRTAPSAADAKKKK.

Belongs to the mitochondrion-specific ribosomal protein mS33 family. Component of the mitochondrial small ribosomal subunit (mt-SSU). Mature N.crassa 74S mitochondrial ribosomes consist of a small (37S) and a large (54S) subunit. The 37S small subunit contains a 16S ribosomal RNA (16S mt-rRNA) and 32 different proteins. The 54S large subunit contains a 23S rRNA (23S mt-rRNA) and 42 different proteins.

It localises to the mitochondrion. Functionally, component of the mitochondrial ribosome (mitoribosome), a dedicated translation machinery responsible for the synthesis of mitochondrial genome-encoded proteins, including at least some of the essential transmembrane subunits of the mitochondrial respiratory chain. The mitoribosomes are attached to the mitochondrial inner membrane and translation products are cotranslationally integrated into the membrane. The polypeptide is Small ribosomal subunit protein mS33 (rsm27) (Neurospora crassa (strain ATCC 24698 / 74-OR23-1A / CBS 708.71 / DSM 1257 / FGSC 987)).